The sequence spans 180 residues: Insertion element IS1296 uncharacterized 21.4 kDa protein (180 aa).

This sequence belongs to the IS150/IS1296 orfA family.

In Mycoplasma mycoides subsp. mycoides SC, this protein is Insertion element IS1296 uncharacterized 21.4 kDa protein.